The sequence spans 579 residues: GPI alpha-1,2-mannosyltransferase 4 (579 aa).

A run of 8 helical transmembrane segments spans residues 131–151 (LLLT…APPM), 156–173 (WNAL…VFYT), 180–200 (IEGL…TWGP), 216–236 (LGGI…FAVV), 258–278 (ALVL…TDSW), 369–389 (YLLL…HQEA), 391–411 (FLIP…QPVP), and 416–436 (VVLF…GGLV).

The protein belongs to the glycosyltransferase 22 family. PIGZ subfamily. Widely expressed at low level, with highest level in brain and colon.

It is found in the endoplasmic reticulum membrane. It functions in the pathway glycolipid biosynthesis; glycosylphosphatidylinositol-anchor biosynthesis. In terms of biological role, alpha-1,2-mannosyltransferase that catalyzes the transfer of the fourth mannose, via an alpha-1,2 bond, from a dolichol-phosphate-mannose (Dol-P-Man) to an alpha-D-Man-(1-&gt;2)-alpha-D-Man-(1-&gt;6)-2-PEtn-alpha-D-Man-(1-&gt;4)-alpha-D-GlcN-(1-&gt;6)-(1-radyl,2-acyl-sn-glycero-3-phospho)-2-acyl-inositol (also termed H6) intermediate and participates in the twelfth step of the glycosylphosphatidylinositol-anchor biosynthesis. The presence of a fourth mannose in GPI is facultative, suggesting that it only exists in some tissues. The polypeptide is GPI alpha-1,2-mannosyltransferase 4 (Homo sapiens (Human)).